The primary structure comprises 963 residues: Integrator complex subunit 4 (963 aa).

At lysine 26 the chain carries N6-acetyllysine. HEAT repeat units lie at residues 66-105 (AESVEGVVRILLEHYYKENDPSVRLKIASLLGLLSKTAGF), 145-183 (QAIQMRLVDVACKHLTDTSHGVRNKCLQLLGNLGSLEKS), 190-228 (GLAARDVQKIIGDYFSDQDPRVRTAAIKAMLQLHERGLK), 229-263 (LHQTIYNQACKLLSDDYEQVRSAAVQLIWVVSQLY), 277-313 (IRLVDDAFGKICHMVSDGSWVVRVQAAKLLGSMEQVS), 369-405 (NLIESGACGAFVHGLEDEMYEVRIAAVEALCMLAQSS), 406-444 (PSFAEKCLDFLVDMFNDEIEEVRLQSIHTMRKISNNITL), and 446-484 (EDQLDTVLAVLEDSSRDIREALHELLCCTNVSTKEGIHL). A Glycyl lysine isopeptide (Lys-Gly) (interchain with G-Cter in SUMO1); alternate cross-link involves residue lysine 791. Lysine 791 is covalently cross-linked (Glycyl lysine isopeptide (Lys-Gly) (interchain with G-Cter in SUMO2); alternate).

The protein belongs to the Integrator subunit 4 family. In terms of assembly, component of the Integrator complex, composed of core subunits INTS1, INTS2, INTS3, INTS4, INTS5, INTS6, INTS7, INTS8, INTS9/RC74, INTS10, INTS11/CPSF3L, INTS12, INTS13, INTS14 and INTS15. The core complex associates with protein phosphatase 2A subunits PPP2CA and PPP2R1A, to form the Integrator-PP2A (INTAC) complex. INTS4 is part of the RNA endonuclease subcomplex, composed of INTS4, INTS9, INTS11 and inositol hexakisphosphate (InsP6). Interacts with BRAT1; interaction is required for the assembly of the RNA endonuclease subcomplex.

The protein localises to the nucleus. It localises to the cytoplasm. Its function is as follows. Component of the integrator complex, a multiprotein complex that terminates RNA polymerase II (Pol II) transcription in the promoter-proximal region of genes. The integrator complex provides a quality checkpoint during transcription elongation by driving premature transcription termination of transcripts that are unfavorably configured for transcriptional elongation: the complex terminates transcription by (1) catalyzing dephosphorylation of the C-terminal domain (CTD) of Pol II subunit POLR2A/RPB1 and SUPT5H/SPT5, (2) degrading the exiting nascent RNA transcript via endonuclease activity and (3) promoting the release of Pol II from bound DNA. The integrator complex is also involved in terminating the synthesis of non-coding Pol II transcripts, such as enhancer RNAs (eRNAs), small nuclear RNAs (snRNAs), telomerase RNAs and long non-coding RNAs (lncRNAs). Within the integrator complex, INTS4 acts as an scaffold that links INTS9 and INTS11. Mediates recruitment of cytoplasmic dynein to the nuclear envelope, probably as component of the integrator complex. In Homo sapiens (Human), this protein is Integrator complex subunit 4.